The sequence spans 211 residues: uncharacterized protein (211 aa).

Disordered regions lie at residues 1-73 (MLRR…SKLK) and 96-123 (TNAA…ASLS). Polar residues-rich tracts occupy residues 26–35 (SKSSLISLTS) and 53–62 (APSQFLSPTN). The span at 63–73 (KRSTSSQSKLK) shows a compositional bias: low complexity. Ser182 is modified (phosphoserine). Thr184 carries the post-translational modification Phosphothreonine. A Phosphoserine modification is found at Ser186.

This is an uncharacterized protein from Saccharomyces cerevisiae (strain ATCC 204508 / S288c) (Baker's yeast).